We begin with the raw amino-acid sequence, 129 residues long: Dormancy-associated protein 2 (129 aa).

Residues 1 to 25 (MDSRKAMLILGLLAMVLLISSEVSA) form the signal peptide. The tract at residues 110–129 (GGYHGGGGHGGHGGASNNGN) is disordered.

This sequence belongs to the DRM1/ARP family. In terms of tissue distribution, expressed in axilary buds. Detected in growing stems, leaflets and floral organs, but not in roots.

This is Dormancy-associated protein 2 from Pisum sativum (Garden pea).